A 137-amino-acid polypeptide reads, in one-letter code: Flavodoxin (137 aa).

One can recognise a Flavodoxin-like domain in the interval 2–137 (VEIVYWSGTG…KELGEAAAKA (136 aa)).

Belongs to the flavodoxin family. FMN is required as a cofactor.

Its function is as follows. Low-potential electron donor to a number of redox enzymes. This is Flavodoxin from Megasphaera elsdenii.